A 773-amino-acid polypeptide reads, in one-letter code: uncharacterized protein (773 aa).

The segment at 192 to 219 (EASGTNNNPKEIEMNSDTTSSVPKSGST) is disordered.

It localises to the cytoplasm. This is an uncharacterized protein from Schizosaccharomyces pombe (strain 972 / ATCC 24843) (Fission yeast).